Here is a 462-residue protein sequence, read N- to C-terminus: BPI fold-containing family B member 2 (462 aa).

The first 22 residues, M1–T22, serve as a signal peptide directing secretion. Position 55 is a phosphothreonine (T55). Residue S63 is modified to Phosphoserine. N99 is a glycosylation site (N-linked (GlcNAc...) asparagine). The cysteines at positions 140 and 177 are disulfide-linked. N-linked (GlcNAc...) asparagine glycosylation is found at N297 and N336.

Belongs to the BPI/LBP/Plunc superfamily. BPI/LBP family.

Its subcellular location is the secreted. The sequence is that of BPI fold-containing family B member 2 (Bpifb2) from Mus musculus (Mouse).